The sequence spans 537 residues: CTP synthase (537 aa).

The segment at 1–268 is amidoligase domain; the sequence is MNTKYIFVTG…DNLVCKKLKL (268 aa). Ser-14 is a binding site for CTP. UTP is bound at residue Ser-14. 15 to 20 is a binding site for ATP; the sequence is SLGKGI. Tyr-55 is a binding site for L-glutamine. Residue Asp-72 coordinates ATP. 2 residues coordinate Mg(2+): Asp-72 and Glu-142. Residues 149 to 151, 189 to 194, and Lys-225 each bind CTP; these read DIE and KTKPTQ. UTP-binding positions include 189-194 and Lys-225; that span reads KTKPTQ. In terms of domain architecture, Glutamine amidotransferase type-1 spans 293 to 535; it reads NIALVGKYVE…IKASLNSKHK (243 aa). Gly-355 lines the L-glutamine pocket. Cys-382 acts as the Nucleophile; for glutamine hydrolysis in catalysis. L-glutamine is bound by residues 383–386, Glu-406, and Arg-463; that span reads LGMQ. Residues His-508 and Glu-510 contribute to the active site.

This sequence belongs to the CTP synthase family. In terms of assembly, homotetramer.

It carries out the reaction UTP + L-glutamine + ATP + H2O = CTP + L-glutamate + ADP + phosphate + 2 H(+). It catalyses the reaction L-glutamine + H2O = L-glutamate + NH4(+). The catalysed reaction is UTP + NH4(+) + ATP = CTP + ADP + phosphate + 2 H(+). The protein operates within pyrimidine metabolism; CTP biosynthesis via de novo pathway; CTP from UDP: step 2/2. With respect to regulation, allosterically activated by GTP, when glutamine is the substrate; GTP has no effect on the reaction when ammonia is the substrate. The allosteric effector GTP functions by stabilizing the protein conformation that binds the tetrahedral intermediate(s) formed during glutamine hydrolysis. Inhibited by the product CTP, via allosteric rather than competitive inhibition. Its function is as follows. Catalyzes the ATP-dependent amination of UTP to CTP with either L-glutamine or ammonia as the source of nitrogen. Regulates intracellular CTP levels through interactions with the four ribonucleotide triphosphates. This Clostridium kluyveri (strain ATCC 8527 / DSM 555 / NBRC 12016 / NCIMB 10680 / K1) protein is CTP synthase.